A 582-amino-acid chain; its full sequence is DnaJ protein ERDJ3A (582 aa).

Positions 1–25 are cleaved as a signal peptide; that stretch reads MGIPVRSLLVASIVLSSIALHVAAA. Residues 29 to 93 form the J domain; it reads DPYKVLGVDK…EKRKNYDLYG (65 aa). Residue asparagine 61 is glycosylated (N-linked (GlcNAc...) asparagine). The tract at residues 178-201 is disordered; the sequence is GGSQHTGSAGKARRGTKSSGHDSS. The stretch at 407 to 437 forms a coiled coil; it reads VKDLRSGIKELKNLLENFEKKNKKLASNQAK.

In terms of assembly, interacts with BIP5.

Its subcellular location is the endoplasmic reticulum. The protein resides in the vacuole. Functionally, may play a role in protein folding in the endoplasmic reticulum. In Oryza sativa subsp. japonica (Rice), this protein is DnaJ protein ERDJ3A.